The following is a 144-amino-acid chain: Transcription antitermination protein NusB (144 aa).

Belongs to the NusB family.

Functionally, involved in transcription antitermination. Required for transcription of ribosomal RNA (rRNA) genes. Binds specifically to the boxA antiterminator sequence of the ribosomal RNA (rrn) operons. The chain is Transcription antitermination protein NusB from Streptococcus agalactiae serotype Ia (strain ATCC 27591 / A909 / CDC SS700).